We begin with the raw amino-acid sequence, 87 residues long: Phosphoribosyl-ATP pyrophosphatase (87 aa).

This sequence belongs to the PRA-PH family.

The protein resides in the cytoplasm. It carries out the reaction 1-(5-phospho-beta-D-ribosyl)-ATP + H2O = 1-(5-phospho-beta-D-ribosyl)-5'-AMP + diphosphate + H(+). The protein operates within amino-acid biosynthesis; L-histidine biosynthesis; L-histidine from 5-phospho-alpha-D-ribose 1-diphosphate: step 2/9. This Pseudarthrobacter chlorophenolicus (strain ATCC 700700 / DSM 12829 / CIP 107037 / JCM 12360 / KCTC 9906 / NCIMB 13794 / A6) (Arthrobacter chlorophenolicus) protein is Phosphoribosyl-ATP pyrophosphatase.